Here is a 364-residue protein sequence, read N- to C-terminus: O-methyltransferase 1 (364 aa).

Residues Ser-183, Gly-207, Asp-230, Asp-250, and Lys-264 each coordinate S-adenosyl-L-homocysteine. Asp-230 provides a ligand contact to S-adenosyl-L-methionine. His-268 functions as the Proton acceptor in the catalytic mechanism.

The protein belongs to the class I-like SAM-binding methyltransferase superfamily. Cation-independent O-methyltransferase family. As to quaternary structure, homodimer.

The catalysed reaction is dopamine + S-adenosyl-L-methionine = 3-methoxytyramine + S-adenosyl-L-homocysteine + H(+). It catalyses the reaction 3,4-dihydroxy-5-methoxyphenethylamine + S-adenosyl-L-methionine = 4-hydroxy-3,5-dimethoxyphenethylamine + S-adenosyl-L-homocysteine + H(+). Its pathway is aromatic compound metabolism. The protein operates within alkaloid biosynthesis. O-methyltransferase participating in the biosynthesis of natural products derived from phenylethylamine, including mescaline, a natural hallucinogen potentially used in psychotherapeutic treatments. Catalyzes the O-methylation of mescaline meta hydroxyl groups, using dopamine and 3,4-dihydroxy-5-methoxyphenethylamine as substrates. This is O-methyltransferase 1 from Lophophora williamsii (Peyote).